The sequence spans 214 residues: Probable GTP-binding protein EngB (214 aa).

An EngB-type G domain is found at 31 to 214 (GPPEIAFAGR…LRAAILQTIA (184 aa)). Residues 39 to 46 (GRSNVGKS), 66 to 70 (GRTQE), 93 to 96 (DMPG), 160 to 163 (TKSD), and 194 to 196 (TSS) contribute to the GTP site. Mg(2+) is bound by residues Ser-46 and Thr-68.

Belongs to the TRAFAC class TrmE-Era-EngA-EngB-Septin-like GTPase superfamily. EngB GTPase family. It depends on Mg(2+) as a cofactor.

In terms of biological role, necessary for normal cell division and for the maintenance of normal septation. The sequence is that of Probable GTP-binding protein EngB from Bartonella tribocorum (strain CIP 105476 / IBS 506).